Reading from the N-terminus, the 119-residue chain is Ribosome-binding factor A (119 aa).

This sequence belongs to the RbfA family. As to quaternary structure, monomer. Binds 30S ribosomal subunits, but not 50S ribosomal subunits or 70S ribosomes.

It is found in the cytoplasm. Functionally, one of several proteins that assist in the late maturation steps of the functional core of the 30S ribosomal subunit. Associates with free 30S ribosomal subunits (but not with 30S subunits that are part of 70S ribosomes or polysomes). Required for efficient processing of 16S rRNA. May interact with the 5'-terminal helix region of 16S rRNA. In Chlorobium phaeovibrioides (strain DSM 265 / 1930) (Prosthecochloris vibrioformis (strain DSM 265)), this protein is Ribosome-binding factor A.